Reading from the N-terminus, the 303-residue chain is MSFTVKVKEELLSLASRDKNELSAMIKMSGSLGLASSGLTLSVTTENAKIARHLYELLSDLYQVKSEIRHHQKTNLRKNRVYTVFLDQKVEEILSDLHLADSFFGIEAGIDQAILTDDEASRAYLRGAFLSNGSMREPDSGKYQLEILSVYLDHAEDLAALMRRFLLDAKTIERKKGAVTYLQRAEDIMDFLIVIGAMEAMAEFESLKLMREARNDLNRANNAETANIARTVTASMKTINNIAKISDNIGIESLPVDLQEVAQLRIQHPDYSIQQLADSLSRPLTKSGVNHRLRKINKIADEL.

Residues 272 to 303 (SIQQLADSLSRPLTKSGVNHRLRKINKIADEL) constitute a DNA-binding region (H-T-H motif).

It belongs to the WhiA family.

In terms of biological role, involved in cell division and chromosome segregation. The sequence is that of Probable cell division protein WhiA from Streptococcus sanguinis (strain SK36).